A 274-amino-acid polypeptide reads, in one-letter code: 4-diphosphocytidyl-2-C-methyl-D-erythritol kinase (274 aa).

Lys8 is a catalytic residue. 94 to 104 serves as a coordination point for ATP; it reads PSGAGLGGGSS. The active site involves Asp136.

Belongs to the GHMP kinase family. IspE subfamily.

It carries out the reaction 4-CDP-2-C-methyl-D-erythritol + ATP = 4-CDP-2-C-methyl-D-erythritol 2-phosphate + ADP + H(+). It participates in isoprenoid biosynthesis; isopentenyl diphosphate biosynthesis via DXP pathway; isopentenyl diphosphate from 1-deoxy-D-xylulose 5-phosphate: step 3/6. Functionally, catalyzes the phosphorylation of the position 2 hydroxy group of 4-diphosphocytidyl-2C-methyl-D-erythritol. This is 4-diphosphocytidyl-2-C-methyl-D-erythritol kinase from Bacteroides thetaiotaomicron (strain ATCC 29148 / DSM 2079 / JCM 5827 / CCUG 10774 / NCTC 10582 / VPI-5482 / E50).